The sequence spans 69 residues: Cytochrome c oxidase subunit 8A, mitochondrial (69 aa).

Residues 1-25 constitute a mitochondrion transit peptide; sequence MSVLTPLLLRGLTGSARRLPVPCAR. An SIFI-degron motif is present at residues 2–19; it reads SVLTPLLLRGLTGSARRL. Over 26–36 the chain is Mitochondrial matrix; sequence VHSKPPREQLG. A helical transmembrane segment spans residues 37-60; it reads TMDIAIGLTSCFVCFLLPSGWVLS. The Mitochondrial intermembrane segment spans residues 61–69; it reads HLENYKKRE.

It belongs to the cytochrome c oxidase VIII family. Component of the cytochrome c oxidase (complex IV, CIV), a multisubunit enzyme composed of 14 subunits. The complex is composed of a catalytic core of 3 subunits MT-CO1, MT-CO2 and MT-CO3, encoded in the mitochondrial DNA, and 11 supernumerary subunits COX4I, COX5A, COX5B, COX6A, COX6B, COX6C, COX7A, COX7B, COX7C, COX8 and NDUFA4, which are encoded in the nuclear genome. The complex exists as a monomer or a dimer and forms supercomplexes (SCs) in the inner mitochondrial membrane with NADH-ubiquinone oxidoreductase (complex I, CI) and ubiquinol-cytochrome c oxidoreductase (cytochrome b-c1 complex, complex III, CIII), resulting in different assemblies (supercomplex SCI(1)III(2)IV(1) and megacomplex MCI(2)III(2)IV(2)). In response to mitochondrial stress, the precursor protein is ubiquitinated by the SIFI complex in the cytoplasm before mitochondrial import, leading to its degradation. Within the SIFI complex, UBR4 initiates ubiquitin chain that are further elongated or branched by KCMF1.

It is found in the mitochondrion inner membrane. It participates in energy metabolism; oxidative phosphorylation. Component of the cytochrome c oxidase, the last enzyme in the mitochondrial electron transport chain which drives oxidative phosphorylation. The respiratory chain contains 3 multisubunit complexes succinate dehydrogenase (complex II, CII), ubiquinol-cytochrome c oxidoreductase (cytochrome b-c1 complex, complex III, CIII) and cytochrome c oxidase (complex IV, CIV), that cooperate to transfer electrons derived from NADH and succinate to molecular oxygen, creating an electrochemical gradient over the inner membrane that drives transmembrane transport and the ATP synthase. Cytochrome c oxidase is the component of the respiratory chain that catalyzes the reduction of oxygen to water. Electrons originating from reduced cytochrome c in the intermembrane space (IMS) are transferred via the dinuclear copper A center (CU(A)) of subunit 2 and heme A of subunit 1 to the active site in subunit 1, a binuclear center (BNC) formed by heme A3 and copper B (CU(B)). The BNC reduces molecular oxygen to 2 water molecules using 4 electrons from cytochrome c in the IMS and 4 protons from the mitochondrial matrix. The polypeptide is Cytochrome c oxidase subunit 8A, mitochondrial (COX8A) (Otolemur crassicaudatus (Brown greater galago)).